A 337-amino-acid polypeptide reads, in one-letter code: MEKRTNYPQLTEKQNHFFKLIVDTYIKTGASVASKELVKRCNLKCSSATIRNVMASLEQIGFLEKYHISSGRVPSTLGLEYYAKFLVYNPKKYFDQKLEDLLAKRRIKIDATLEEAAAIVSEVAGVTVVATSNNAAETMKSIQLTTLSELSAIVVIVTSSGRVESKIFNFENSDISLEDLRVAIRLFKERLVDTPLIHLANKARALTPIFGQQLKNYELILQKFIKNIFVFEEETTNKTFNKGAIVLSRNISREEIANVLDLIEKHSVWESIDNDLDEDNNIKLDVSRPNLSIISKKIDFSNEKNIKEITVIGPNNLDYGESFEALEMLEKIIKEKK.

The protein belongs to the HrcA family.

Functionally, negative regulator of class I heat shock genes (grpE-dnaK-dnaJ and groELS operons). Prevents heat-shock induction of these operons. The protein is Heat-inducible transcription repressor HrcA of Metamycoplasma arthritidis (strain 158L3-1) (Mycoplasma arthritidis).